Reading from the N-terminus, the 21-residue chain is LRDYANRVINGGPVEAAGPPA.

The disordered stretch occupies residues 1–21 (LRDYANRVINGGPVEAAGPPA).

In terms of tissue distribution, expressed by the venom gland.

The protein resides in the secreted. Functionally, inhibits angiotensin-converting enzyme (ACE), but does not serve as substrate for the enzyme. Potentiate bradykinin (BK) on the isolated guinea pig ileum as well as the isolated rat uterus for contraction. Also potentiates in vivo the depressor effect of BK on arterial blood pressure in the normotensive anesthetized rat. Intracerebroventricular injection into mice does not show toxic activity. This is Bradykinin-potentiating peptide K12 from Buthus occitanus (Common European scorpion).